Here is a 465-residue protein sequence, read N- to C-terminus: Trigger factor (465 aa).

A PPIase FKBP-type domain is found at 163–248 (GDVINFNFKG…INKIKENQPA (86 aa)). Positions 431–465 (EIVNKNQNDNEIEQDKEQKDNNEEKIKQENNLENK) are disordered. Residues 443-465 (EQDKEQKDNNEEKIKQENNLENK) show a composition bias toward basic and acidic residues.

Belongs to the FKBP-type PPIase family. Tig subfamily.

Its subcellular location is the cytoplasm. The enzyme catalyses [protein]-peptidylproline (omega=180) = [protein]-peptidylproline (omega=0). Functionally, involved in protein export. Acts as a chaperone by maintaining the newly synthesized protein in an open conformation. Functions as a peptidyl-prolyl cis-trans isomerase. The sequence is that of Trigger factor from Mesomycoplasma hyopneumoniae (strain J / ATCC 25934 / NCTC 10110) (Mycoplasma hyopneumoniae).